Consider the following 456-residue polypeptide: Protein trichome birefringence-like 25 (456 aa).

A helical; Signal-anchor for type II membrane protein membrane pass occupies residues 26–42; sequence QIFLKSVAFFLLIGLAY. Residues 172-174 carry the GDS motif motif; sequence GDS. Positions 426–440 match the DCXHWCLPGXXDXWN motif motif; sequence DCLHWCLPGPIDSWN.

This sequence belongs to the PC-esterase family. TBL subfamily.

It localises to the membrane. In terms of biological role, may be involved in the O-acetylation of mannan. May act as a bridging protein that binds pectin and other cell wall polysaccharides. Probably involved in maintaining esterification of pectins. This chain is Protein trichome birefringence-like 25 (TBL25), found in Arabidopsis thaliana (Mouse-ear cress).